We begin with the raw amino-acid sequence, 916 residues long: Extracellular signal-regulated kinase 7 (916 aa).

A Protein kinase domain is found at 25–319 (FDVRKRMGKG…AKEAIRHPYV (295 aa)). Residues 31-39 (MGKGAYGIV) and Lys-54 contribute to the ATP site. Catalysis depends on Asp-149, which acts as the Proton acceptor. 2 stretches are compositionally biased toward polar residues: residues 364–376 (CSNRTVSNSTPSS) and 390–403 (QARTTSAKQPTTSP). Disordered stretches follow at residues 364 to 419 (CSNR…TQSR), 452 to 477 (PPAAAPPAPAATAPAVPRKSGDKSVP), 588 to 608 (PSETEHRQQREERAYQRQMKR), 711 to 742 (KKLQRSKESDEKDEDDRRALPEGIGGPGSQNY), 792 to 813 (ELNPAPDSGGRDSGSEHSPGRD), and 883 to 916 (CRHRHHKPNHHAPYDHMRPTEDDIQEADSLPESN). 3 stretches are compositionally biased toward basic and acidic residues: residues 590–608 (ETEHRQQREERAYQRQMKR), 715–730 (RSKESDEKDEDDRRAL), and 800–811 (GGRDSGSEHSPG). A compositionally biased stretch (basic residues) spans 883 to 892 (CRHRHHKPNH). Positions 894-903 (APYDHMRPTE) are enriched in basic and acidic residues.

Belongs to the protein kinase superfamily. Ser/Thr protein kinase family.

It catalyses the reaction L-seryl-[protein] + ATP = O-phospho-L-seryl-[protein] + ADP + H(+). The catalysed reaction is L-threonyl-[protein] + ATP = O-phospho-L-threonyl-[protein] + ADP + H(+). Its function is as follows. Atypical MAPK protein that regulates protein secretion in a kinase activity-dependent manner. In response to starvation regulates protein secretion by mediating transitional endoplasmic reticulum site disassembly. Mediates inhibition of insulin-like peptide secretion upon disturbed ribosome biogenesis and acts as a downstream effector of TP53. This is Extracellular signal-regulated kinase 7 from Drosophila melanogaster (Fruit fly).